The following is a 302-amino-acid chain: MDQKRLTHLRQLEAESIHIIREVAAEFANPVMLYSIGKDSSVMLHLARKAFYPGTLPFPLLHVDTGWKFREMYAFRDRTANAYGCELLVHKNPEGVAMGINPFVHGSAKHTDIMKTEGLKQALNKYGFDAAFGGARRDEEKSRAKERIYSFRDRFHRWDPKNQRPELWRNYNGQINKGESIRVFPLSNWTEQDIWQYIWLENIDIVPLYLAAERPVLERDGMLMMVDDDRIDLQPGEVIKKRMVRFRTLGCWPLTGAVESHAQTLPEIIEEMLVSTTSERQGRMIDRDQAGSMELKKRQGYF.

Belongs to the PAPS reductase family. CysD subfamily. In terms of assembly, heterodimer composed of CysD, the smaller subunit, and CysN.

It carries out the reaction sulfate + ATP + H(+) = adenosine 5'-phosphosulfate + diphosphate. The protein operates within sulfur metabolism; hydrogen sulfide biosynthesis; sulfite from sulfate: step 1/3. In terms of biological role, with CysN forms the ATP sulfurylase (ATPS) that catalyzes the adenylation of sulfate producing adenosine 5'-phosphosulfate (APS) and diphosphate, the first enzymatic step in sulfur assimilation pathway. APS synthesis involves the formation of a high-energy phosphoric-sulfuric acid anhydride bond driven by GTP hydrolysis by CysN coupled to ATP hydrolysis by CysD. The chain is Sulfate adenylyltransferase subunit 2 from Salmonella agona (strain SL483).